A 351-amino-acid chain; its full sequence is Photosystem II D2 protein (351 aa).

Residues 39–59 form a helical membrane-spanning segment; the sequence is CSYLALGGWLTGTTFVTSWYT. H116 lines the chlorophyll a pocket. A helical membrane pass occupies residues 123-139; that stretch reads GFCLRQFEIARLVGIRP. Pheophytin a is bound by residues Q128 and N141. A helical membrane pass occupies residues 151-164; it reads VFVSVFLMYPLGQA. H196 contributes to the chlorophyll a binding site. A helical transmembrane segment spans residues 206–226; the sequence is GALLCAIHGATVQNTLFEDGD. Residues H213 and F260 each contribute to the a plastoquinone site. H213 provides a ligand contact to Fe cation. H267 serves as a coordination point for Fe cation. A helical transmembrane segment spans residues 277–293; sequence GLWTSAFGIVGLALNLR.

This sequence belongs to the reaction center PufL/M/PsbA/D family. As to quaternary structure, PSII is composed of 1 copy each of membrane proteins PsbA, PsbB, PsbC, PsbD, PsbE, PsbF, PsbH, PsbI, PsbJ, PsbK, PsbL, PsbM, PsbT, PsbX, PsbY, PsbZ, Psb30/Ycf12, at least 3 peripheral proteins of the oxygen-evolving complex and a large number of cofactors. It forms dimeric complexes. The D1/D2 heterodimer binds P680, chlorophylls that are the primary electron donor of PSII, and subsequent electron acceptors. It shares a non-heme iron and each subunit binds pheophytin, quinone, additional chlorophylls, carotenoids and lipids. There is also a Cl(-1) ion associated with D1 and D2, which is required for oxygen evolution. The PSII complex binds additional chlorophylls, carotenoids and specific lipids. serves as cofactor.

The protein localises to the plastid. The protein resides in the chloroplast thylakoid membrane. It catalyses the reaction 2 a plastoquinone + 4 hnu + 2 H2O = 2 a plastoquinol + O2. Photosystem II (PSII) is a light-driven water:plastoquinone oxidoreductase that uses light energy to abstract electrons from H(2)O, generating O(2) and a proton gradient subsequently used for ATP formation. It consists of a core antenna complex that captures photons, and an electron transfer chain that converts photonic excitation into a charge separation. The D1/D2 (PsbA/PsbD) reaction center heterodimer binds P680, the primary electron donor of PSII as well as several subsequent electron acceptors. D2 is needed for assembly of a stable PSII complex. The chain is Photosystem II D2 protein from Gracilaria tenuistipitata var. liui (Red alga).